Here is a 347-residue protein sequence, read N- to C-terminus: GMP reductase (347 aa).

Residue 108–131 (ADFEKTKQILDLNPALNFVCIDVA) participates in NADP(+) binding. Positions 181 and 183 each coordinate K(+). Cys-186 acts as the Thioimidate intermediate in catalysis. 216–239 (IVSDGGCTTPGDVAKAFGGGADFV) provides a ligand contact to NADP(+).

The protein belongs to the IMPDH/GMPR family. GuaC type 1 subfamily. As to quaternary structure, homotetramer.

It catalyses the reaction IMP + NH4(+) + NADP(+) = GMP + NADPH + 2 H(+). In terms of biological role, catalyzes the irreversible NADPH-dependent deamination of GMP to IMP. It functions in the conversion of nucleobase, nucleoside and nucleotide derivatives of G to A nucleotides, and in maintaining the intracellular balance of A and G nucleotides. This is GMP reductase from Shigella boydii serotype 18 (strain CDC 3083-94 / BS512).